A 1309-amino-acid polypeptide reads, in one-letter code: Tetratricopeptide repeat protein 41 (1309 aa).

TPR repeat units follow at residues Pro399–Ile432, Trp651–Glu684, Leu817–Ser851, Leu859–Phe892, Met989–Ala1024, and Ser1042–His1079.

Its subcellular location is the cytoplasm. This chain is Tetratricopeptide repeat protein 41, found in Rattus norvegicus (Rat).